The primary structure comprises 258 residues: Imidazole glycerol phosphate synthase subunit HisF (258 aa).

Active-site residues include aspartate 11 and aspartate 130.

Belongs to the HisA/HisF family. In terms of assembly, heterodimer of HisH and HisF.

It localises to the cytoplasm. The enzyme catalyses 5-[(5-phospho-1-deoxy-D-ribulos-1-ylimino)methylamino]-1-(5-phospho-beta-D-ribosyl)imidazole-4-carboxamide + L-glutamine = D-erythro-1-(imidazol-4-yl)glycerol 3-phosphate + 5-amino-1-(5-phospho-beta-D-ribosyl)imidazole-4-carboxamide + L-glutamate + H(+). It functions in the pathway amino-acid biosynthesis; L-histidine biosynthesis; L-histidine from 5-phospho-alpha-D-ribose 1-diphosphate: step 5/9. Functionally, IGPS catalyzes the conversion of PRFAR and glutamine to IGP, AICAR and glutamate. The HisF subunit catalyzes the cyclization activity that produces IGP and AICAR from PRFAR using the ammonia provided by the HisH subunit. This Escherichia coli O6:K15:H31 (strain 536 / UPEC) protein is Imidazole glycerol phosphate synthase subunit HisF.